Reading from the N-terminus, the 176-residue chain is Ferritin heavy chain B (176 aa).

The Ferritin-like diiron domain occupies 7 to 156 (QNFNSDCEAA…DYITNLKRLG (150 aa)). Fe cation is bound by residues E24, E59, H62, E104, and Q138.

This sequence belongs to the ferritin family. As to quaternary structure, oligomer of 24 subunits. There are two types of subunits: L (light) chain and H (heavy) chain. The functional molecule is roughly spherical and contains a central cavity into which the insoluble mineral iron core is deposited.

Its subcellular location is the cytoplasm. The enzyme catalyses 4 Fe(2+) + O2 + 4 H(+) = 4 Fe(3+) + 2 H2O. Its function is as follows. Stores iron in a soluble, non-toxic, readily available form. Important for iron homeostasis. Has ferroxidase activity. Iron is taken up in the ferrous form and deposited as ferric hydroxides after oxidation. This Xenopus laevis (African clawed frog) protein is Ferritin heavy chain B (fth1-b).